The primary structure comprises 212 residues: Golgi-associated RAB2 interactor protein 5A (212 aa).

Disordered regions lie at residues Met1–Ala21 and Pro162–Leu212. A compositionally biased stretch (acidic residues) spans Ala169–Val185.

Belongs to the GARIN family. Interacts (via N-terminus) with RAB2B (in GTP-bound form). As to expression, expressed in testis (at protein level).

The protein resides in the golgi apparatus. Functionally, RAB2B effector protein which promotes cytosolic DNA-induced innate immune responses. Regulates IFN responses against DNA viruses by regulating the CGAS-STING signaling axis. The chain is Golgi-associated RAB2 interactor protein 5A from Mus musculus (Mouse).